Here is a 312-residue protein sequence, read N- to C-terminus: Aldehyde reductase YPR1 (312 aa).

The Proton donor role is filled by Y56. A substrate-binding site is contributed by H112. 220–274 (SPFGSANAPLLKEQAIIDMAKKHGVEPAQLIISWSIQRGYVVLAKSVNPERIVSN) is a binding site for NADP(+).

The protein belongs to the aldo/keto reductase family.

Its subcellular location is the cytoplasm. The catalysed reaction is a primary alcohol + NADP(+) = an aldehyde + NADPH + H(+). It catalyses the reaction 2-methylbutan-1-ol + NADP(+) = 2-methylbutanal + NADPH + H(+). The enzyme catalyses hexan-1-ol + NADP(+) = hexanal + NADPH + H(+). Its function is as follows. Aldehyde reductase with broad substrate specificity, catalyzing the NADPH-dependent reduction of aldehydes into the corresponding alcohols. In vitro, displays high specific activity towards 2-methylbutanal (2-methylbutyraldehyde), as well as other aldehydes such as hexanal (a toxic lipid peroxidation product and phytoalexin), but exhibits extremely low activity as a glycerol dehydrogenase. Seems to contribute to 2-methylbutanal reduction in vivo, and may therefore play a role in isoleucine catabolism and fusel alcohol formation. The chain is Aldehyde reductase YPR1 (YPR1) from Saccharomyces cerevisiae (strain ATCC 204508 / S288c) (Baker's yeast).